A 363-amino-acid chain; its full sequence is Phospho-N-acetylmuramoyl-pentapeptide-transferase (363 aa).

Transmembrane regions (helical) follow at residues 3 to 23 (TVLIAGAFSLVVSLFGTPLYI), 55 to 75 (VVIILAALLAYGAAHLFTGAL), 76 to 96 (PTVSGLLVLLLMTGLGVVGFL), 116 to 136 (LAGQGLVGIVFAVLALQFPAA), 158 to 178 (LAVFGAVGGTVLFVVWALIIT), 190 to 210 (GLDGLATGATTMVLAAYVLIC), 237 to 257 (LAVVAAAVMGACFGFLWWNAS), 261 to 281 (IFMGDTGSLALGGALAGLAIL), 286 to 306 (ILLVLLGGLFVLITLSVILQV), and 340 to 360 (FWIIAGLFVFLGLGVFYAEWV).

Belongs to the glycosyltransferase 4 family. MraY subfamily. It depends on Mg(2+) as a cofactor.

Its subcellular location is the cell membrane. The enzyme catalyses UDP-N-acetyl-alpha-D-muramoyl-L-alanyl-gamma-D-glutamyl-meso-2,6-diaminopimeloyl-D-alanyl-D-alanine + di-trans,octa-cis-undecaprenyl phosphate = di-trans,octa-cis-undecaprenyl diphospho-N-acetyl-alpha-D-muramoyl-L-alanyl-D-glutamyl-meso-2,6-diaminopimeloyl-D-alanyl-D-alanine + UMP. It functions in the pathway cell wall biogenesis; peptidoglycan biosynthesis. Functionally, catalyzes the initial step of the lipid cycle reactions in the biosynthesis of the cell wall peptidoglycan: transfers peptidoglycan precursor phospho-MurNAc-pentapeptide from UDP-MurNAc-pentapeptide onto the lipid carrier undecaprenyl phosphate, yielding undecaprenyl-pyrophosphoryl-MurNAc-pentapeptide, known as lipid I. The polypeptide is Phospho-N-acetylmuramoyl-pentapeptide-transferase (Kineococcus radiotolerans (strain ATCC BAA-149 / DSM 14245 / SRS30216)).